Here is a 395-residue protein sequence, read N- to C-terminus: S-adenosylmethionine synthase 3 (395 aa).

Glu-10 provides a ligand contact to Mg(2+). His-16 lines the ATP pocket. Glu-44 is a binding site for K(+). 2 residues coordinate L-methionine: Glu-57 and Gln-100. Residues 168–170, 236–239, Asp-247, 253–254, Ala-270, Lys-274, and Lys-278 each bind ATP; these read DGK, SGRF, and RK. Asp-247 contacts L-methionine. An L-methionine-binding site is contributed by Lys-278.

It belongs to the AdoMet synthase family. In terms of assembly, homotetramer. Requires Mn(2+) as cofactor. Mg(2+) serves as cofactor. The cofactor is Co(2+). It depends on K(+) as a cofactor.

The protein localises to the cytoplasm. The enzyme catalyses L-methionine + ATP + H2O = S-adenosyl-L-methionine + phosphate + diphosphate. It participates in amino-acid biosynthesis; S-adenosyl-L-methionine biosynthesis; S-adenosyl-L-methionine from L-methionine: step 1/1. In terms of biological role, catalyzes the formation of S-adenosylmethionine from methionine and ATP. The reaction comprises two steps that are both catalyzed by the same enzyme: formation of S-adenosylmethionine (AdoMet) and triphosphate, and subsequent hydrolysis of the triphosphate. The polypeptide is S-adenosylmethionine synthase 3 (METK3) (Populus trichocarpa (Western balsam poplar)).